The primary structure comprises 314 residues: MKIVLALGGNALQKDSKDKSAEGQLETCRQTAISVADLIEDGHEVSIVHGNGPQVGQILASIELAHQVDNGNPLFPFDVVGAFSEGYIGYHLQNTIREELLKRGIEKSVDTITTQVIVDKNDPGFKNPTKPIGSFYTKEEAEKLEKDKGYTMKEDAGRGYRRVVASPKPVDIVEKEAIKTMVDSGFIVIACGGGGIPVVEDGDRLEGVPAVIDKDFAAEKLAEILDADALLILTAVDRVCVNFNKPDQKALKEINLEEVDKYIEEGQFAPGSMLPKVEACKKFVLSGDKKVAIIASLTNAKAALRGESGTKIVK.

This sequence belongs to the carbamate kinase family. Homodimer.

It localises to the cytoplasm. The enzyme catalyses hydrogencarbonate + NH4(+) + ATP = carbamoyl phosphate + ADP + H2O + H(+). It functions in the pathway metabolic intermediate metabolism; carbamoyl phosphate degradation; CO(2) and NH(3) from carbamoyl phosphate: step 1/1. This Clostridium perfringens (strain 13 / Type A) protein is Carbamate kinase (arcC).